The sequence spans 199 residues: Charged multivesicular body protein 1b (199 aa).

Positions 26 to 48 form a coiled coil; sequence DKEEKAEKAKIKKAIQKGNMEVA. Positions 132-156 are interaction with IST1; sequence MEDTMSSTTTLTTPQNQVDMLLQEM. Residues 167 to 199 form a disordered region; the sequence is ELPQGQTGSVGTSVASAEQDELSQRLARLRDQV. Polar residues predominate over residues 170–182; sequence QGQTGSVGTSVAS. The interaction with SPAST stretch occupies residues 174–199; it reads GSVGTSVASAEQDELSQRLARLRDQV. A coiled-coil region spans residues 178–199; it reads TSVASAEQDELSQRLARLRDQV. The interval 180–196 is interaction with VPS4A, MITD1 and STAMBP; the sequence is VASAEQDELSQRLARLR. Residues 180–199 are interaction with VTA1; the sequence is VASAEQDELSQRLARLRDQV. An interaction with VPS4B region spans residues 183-199; the sequence is AEQDELSQRLARLRDQV. The short motif at 186–196 is the MIT-interacting motif element; it reads DELSQRLARLR.

It belongs to the SNF7 family. Probable peripherally associated component of the endosomal sorting required for transport complex III (ESCRT-III). ESCRT-III components are thought to multimerize to form a flat lattice on the perimeter membrane of the endosome. Several assembly forms of ESCRT-III may exist that interact and act sequentially. Interacts with CHMP1A. Interacts with VTA1; the interaction probably involves the open conformation of CHMP1B. Interacts with CHMP2A. Interacts with VPS4A; the interaction is direct. Interacts with VPS4B; the interaction is direct. Interacts with SPAST (via MIT domain); the interaction is direct. Interacts with IST1. Interacts with MITD1. Interacts with STAMBP. As to expression, widely expressed. Expressed in pancreas, kidney, skeletal muscle, liver, lung, placenta and brain.

It localises to the cytoplasm. Its subcellular location is the cytosol. The protein resides in the endosome. The protein localises to the late endosome membrane. Probable peripherally associated component of the endosomal sorting required for transport complex III (ESCRT-III) which is involved in multivesicular bodies (MVBs) formation and sorting of endosomal cargo proteins into MVBs. MVBs contain intraluminal vesicles (ILVs) that are generated by invagination and scission from the limiting membrane of the endosome and mostly are delivered to lysosomes enabling degradation of membrane proteins, such as stimulated growth factor receptors, lysosomal enzymes and lipids. The MVB pathway appears to require the sequential function of ESCRT-O, -I,-II and -III complexes. ESCRT-III proteins mostly dissociate from the invaginating membrane before the ILV is released. The ESCRT machinery also functions in topologically equivalent membrane fission events, such as the terminal stages of cytokinesis and the budding of enveloped viruses (HIV-1 and other lentiviruses). ESCRT-III proteins are believed to mediate the necessary vesicle extrusion and/or membrane fission activities, possibly in conjunction with the AAA ATPase VPS4. Involved in cytokinesis. Involved in recruiting VPS4A and/or VPS4B and SPAST to the midbody of dividing cells. Involved in HIV-1 p6- and p9-dependent virus release. In Homo sapiens (Human), this protein is Charged multivesicular body protein 1b (CHMP1B).